A 127-amino-acid chain; its full sequence is Glycine cleavage system H protein (127 aa).

The Lipoyl-binding domain occupies 24-105 (TALVGITDFA…YGSGWMVKMK (82 aa)). K65 carries the N6-lipoyllysine modification.

Belongs to the GcvH family. As to quaternary structure, the glycine cleavage system is composed of four proteins: P, T, L and H. It depends on (R)-lipoate as a cofactor.

The glycine cleavage system catalyzes the degradation of glycine. The H protein shuttles the methylamine group of glycine from the P protein to the T protein. The sequence is that of Glycine cleavage system H protein from Chlorobium luteolum (strain DSM 273 / BCRC 81028 / 2530) (Pelodictyon luteolum).